Consider the following 459-residue polypeptide: Cysteine--tRNA ligase (459 aa).

Residue cysteine 28 participates in Zn(2+) binding. The 'HIGH' region signature appears at 30-40 (VTVYDLCHIGH). Residues cysteine 209, histidine 234, and glutamate 238 each contribute to the Zn(2+) site. The 'KMSKS' region signature appears at 266–270 (KMSKS). An ATP-binding site is contributed by lysine 269.

Belongs to the class-I aminoacyl-tRNA synthetase family. Monomer. It depends on Zn(2+) as a cofactor.

The protein localises to the cytoplasm. The enzyme catalyses tRNA(Cys) + L-cysteine + ATP = L-cysteinyl-tRNA(Cys) + AMP + diphosphate. The polypeptide is Cysteine--tRNA ligase (Histophilus somni (strain 2336) (Haemophilus somnus)).